Consider the following 529-residue polypeptide: Peptide chain release factor 3 (529 aa).

The tr-type G domain occupies 11-280 (NSRRTFAIIS…AFINWAPEPK (270 aa)). GTP-binding positions include 20 to 27 (SHPDAGKT), 88 to 92 (DTPGH), and 142 to 145 (NKMD).

This sequence belongs to the TRAFAC class translation factor GTPase superfamily. Classic translation factor GTPase family. PrfC subfamily.

It localises to the cytoplasm. Functionally, increases the formation of ribosomal termination complexes and stimulates activities of RF-1 and RF-2. It binds guanine nucleotides and has strong preference for UGA stop codons. It may interact directly with the ribosome. The stimulation of RF-1 and RF-2 is significantly reduced by GTP and GDP, but not by GMP. The sequence is that of Peptide chain release factor 3 from Acinetobacter baylyi (strain ATCC 33305 / BD413 / ADP1).